We begin with the raw amino-acid sequence, 729 residues long: Catalase-peroxidase 1 (729 aa).

A cross-link (tryptophyl-tyrosyl-methioninium (Trp-Tyr) (with M-252)) is located at residues 98–226 (WHSAGSYRIA…LAAVMMGLIY (129 aa)). The active-site Proton acceptor is His99. A cross-link (tryptophyl-tyrosyl-methioninium (Tyr-Met) (with W-98)) is located at residues 226-252 (YVNPEGVDGNPDPLRTAKDIRETFARM). His267 is a binding site for heme b.

The protein belongs to the peroxidase family. Peroxidase/catalase subfamily. In terms of assembly, homodimer or homotetramer. Heme b is required as a cofactor. Formation of the three residue Trp-Tyr-Met cross-link is important for the catalase, but not the peroxidase activity of the enzyme.

It carries out the reaction H2O2 + AH2 = A + 2 H2O. It catalyses the reaction 2 H2O2 = O2 + 2 H2O. Functionally, bifunctional enzyme with both catalase and broad-spectrum peroxidase activity. The sequence is that of Catalase-peroxidase 1 from Cellvibrio japonicus (strain Ueda107) (Pseudomonas fluorescens subsp. cellulosa).